Consider the following 696-residue polypeptide: uncharacterized protein (696 aa).

The next 10 helical transmembrane spans lie at Ile38–Ala58, Leu107–Val127, Ala215–Leu235, Ser245–Leu265, Thr292–Leu312, Val329–Glu349, Phe380–Ala400, Phe402–Gly422, Phe433–Ser453, and Leu457–Pro477. CBS domains follow at residues Arg527–Ser587 and Ile617–Gly674.

It belongs to the chloride channel (TC 2.A.49) family.

The protein resides in the membrane. Its function is as follows. Voltage-gated chloride channel. This is an uncharacterized protein from Schizosaccharomyces pombe (strain 972 / ATCC 24843) (Fission yeast).